The sequence spans 140 residues: Anti-sigma F factor (140 aa).

This sequence belongs to the anti-sigma-factor family.

It carries out the reaction L-seryl-[protein] + ATP = O-phospho-L-seryl-[protein] + ADP + H(+). It catalyses the reaction L-threonyl-[protein] + ATP = O-phospho-L-threonyl-[protein] + ADP + H(+). Binds to sigma F and blocks its ability to form an RNA polymerase holoenzyme (E-sigma F). Phosphorylates SpoIIAA on a serine residue. This phosphorylation may enable SpoIIAA to act as an anti-anti-sigma factor that counteracts SpoIIAB and thus releases sigma F from inhibition. The chain is Anti-sigma F factor from Clostridium perfringens (strain SM101 / Type A).